The chain runs to 227 residues: Cytochrome c oxidase subunit 2 (227 aa).

At 1–14 the chain is on the mitochondrial intermembrane side; that stretch reads MAYPFQLGLQDATS. Residues 15–45 traverse the membrane as a helical segment; that stretch reads PIMEELTNFHDHTLMIVFLISTLVLYIISLM. Residues 46 to 59 lie on the Mitochondrial matrix side of the membrane; that stretch reads LTTKLTHTSTMDAQ. Residues 60 to 87 traverse the membrane as a helical segment; sequence EVETIWTILPAVILILIALPSLRILYMM. The Mitochondrial intermembrane segment spans residues 88-227; that stretch reads DEINNPVLTV…YFENWSASMI (140 aa). Residues His161, Cys196, Glu198, Cys200, His204, and Met207 each contribute to the Cu cation site. Mg(2+) is bound at residue Glu198. Position 218 is a phosphotyrosine (Tyr218).

The protein belongs to the cytochrome c oxidase subunit 2 family. In terms of assembly, component of the cytochrome c oxidase (complex IV, CIV), a multisubunit enzyme composed of 14 subunits. The complex is composed of a catalytic core of 3 subunits MT-CO1, MT-CO2 and MT-CO3, encoded in the mitochondrial DNA, and 11 supernumerary subunits COX4I, COX5A, COX5B, COX6A, COX6B, COX6C, COX7A, COX7B, COX7C, COX8 and NDUFA4, which are encoded in the nuclear genome. The complex exists as a monomer or a dimer and forms supercomplexes (SCs) in the inner mitochondrial membrane with NADH-ubiquinone oxidoreductase (complex I, CI) and ubiquinol-cytochrome c oxidoreductase (cytochrome b-c1 complex, complex III, CIII), resulting in different assemblies (supercomplex SCI(1)III(2)IV(1) and megacomplex MCI(2)III(2)IV(2)). Found in a complex with TMEM177, COA6, COX18, COX20, SCO1 and SCO2. Interacts with TMEM177 in a COX20-dependent manner. Interacts with COX20. Interacts with COX16. It depends on Cu cation as a cofactor.

It localises to the mitochondrion inner membrane. It carries out the reaction 4 Fe(II)-[cytochrome c] + O2 + 8 H(+)(in) = 4 Fe(III)-[cytochrome c] + 2 H2O + 4 H(+)(out). In terms of biological role, component of the cytochrome c oxidase, the last enzyme in the mitochondrial electron transport chain which drives oxidative phosphorylation. The respiratory chain contains 3 multisubunit complexes succinate dehydrogenase (complex II, CII), ubiquinol-cytochrome c oxidoreductase (cytochrome b-c1 complex, complex III, CIII) and cytochrome c oxidase (complex IV, CIV), that cooperate to transfer electrons derived from NADH and succinate to molecular oxygen, creating an electrochemical gradient over the inner membrane that drives transmembrane transport and the ATP synthase. Cytochrome c oxidase is the component of the respiratory chain that catalyzes the reduction of oxygen to water. Electrons originating from reduced cytochrome c in the intermembrane space (IMS) are transferred via the dinuclear copper A center (CU(A)) of subunit 2 and heme A of subunit 1 to the active site in subunit 1, a binuclear center (BNC) formed by heme A3 and copper B (CU(B)). The BNC reduces molecular oxygen to 2 water molecules using 4 electrons from cytochrome c in the IMS and 4 protons from the mitochondrial matrix. In Leopoldamys sabanus (Long-tailed giant rat), this protein is Cytochrome c oxidase subunit 2 (MT-CO2).